The chain runs to 622 residues: Probable E3 ubiquitin-protein ligase DTX2 (622 aa).

2 consecutive WWE domains span residues 8–97 (SLVQ…AVRR) and 98–174 (HLFP…SVRR). 3 positions are modified to asymmetric dimethylarginine: Arg-213, Arg-215, and Arg-233. Position 249 is an N6-acetyllysine (Lys-249). Disordered stretches follow at residues 249 to 324 (KPSL…VPMQ) and 355 to 393 (APQP…EPEP). Arg-256 carries the post-translational modification Omega-N-methylarginine. A compositionally biased stretch (polar residues) spans 274–285 (LGSQPLYRSSLS). Over residues 299–322 (SGAVSASLPSGPSSSPGSVPATVP) the composition is skewed to low complexity. At Ser-360 the chain carries Phosphoserine. The span at 372 to 381 (GSVKRLRKMS) shows a compositional bias: basic residues. An RING-type zinc finger spans residues 412-473 (CIICMEKLST…DGSLQCPSCK (62 aa)).

The protein belongs to the Deltex family. As to quaternary structure, homodimer. May form a heterodimer with other members of the Deltex family. Interacts with NOTCH1.

It is found in the cytoplasm. The protein localises to the nucleus. It catalyses the reaction S-ubiquitinyl-[E2 ubiquitin-conjugating enzyme]-L-cysteine + [acceptor protein]-L-lysine = [E2 ubiquitin-conjugating enzyme]-L-cysteine + N(6)-ubiquitinyl-[acceptor protein]-L-lysine.. Its pathway is protein modification; protein ubiquitination. Its function is as follows. Regulator of Notch signaling, a signaling pathway involved in cell-cell communications that regulates a broad spectrum of cell-fate determinations. Probably acts both as a positive and negative regulator of Notch, depending on the developmental and cell context. Mediates the antineural activity of Notch, possibly by inhibiting the transcriptional activation mediated by MATCH1. Functions as a ubiquitin ligase protein in vitro, suggesting that it may regulate the Notch pathway via some ubiquitin ligase activity. In Homo sapiens (Human), this protein is Probable E3 ubiquitin-protein ligase DTX2 (DTX2).